Here is a 474-residue protein sequence, read N- to C-terminus: tRNA-2-methylthio-N(6)-dimethylallyladenosine synthase (474 aa).

The region spanning 3–120 (KKLHIKTWGC…LPEMINSVRG (118 aa)) is the MTTase N-terminal domain. Residues Cys12, Cys49, Cys83, Cys157, Cys161, and Cys164 each contribute to the [4Fe-4S] cluster site. The Radical SAM core domain occupies 143–375 (RAEGPTAFVS…QERINQQAMA (233 aa)). In terms of domain architecture, TRAM spans 378–441 (RRMLGTTQRI…PNSLRGKVVR (64 aa)).

The protein belongs to the methylthiotransferase family. MiaB subfamily. Monomer. Requires [4Fe-4S] cluster as cofactor.

It is found in the cytoplasm. It catalyses the reaction N(6)-dimethylallyladenosine(37) in tRNA + (sulfur carrier)-SH + AH2 + 2 S-adenosyl-L-methionine = 2-methylsulfanyl-N(6)-dimethylallyladenosine(37) in tRNA + (sulfur carrier)-H + 5'-deoxyadenosine + L-methionine + A + S-adenosyl-L-homocysteine + 2 H(+). Its function is as follows. Catalyzes the methylthiolation of N6-(dimethylallyl)adenosine (i(6)A), leading to the formation of 2-methylthio-N6-(dimethylallyl)adenosine (ms(2)i(6)A) at position 37 in tRNAs that read codons beginning with uridine. This Salmonella paratyphi A (strain ATCC 9150 / SARB42) protein is tRNA-2-methylthio-N(6)-dimethylallyladenosine synthase.